Consider the following 322-residue polypeptide: Arginase-1 (322 aa).

The segment at 1–27 (MSFKSQSIGIIGAPFSKGQPRGGVEEG) is disordered. Position 7 is a phosphoserine (Ser7). At Lys17 the chain carries N6-succinyllysine. Ser72 is subject to Phosphoserine. An N6-succinyllysine modification is found at Lys75. Residues His101, Asp124, His126, and Asp128 each coordinate Mn(2+). Residues 126–130 (HTDIN) and 137–139 (TGN) each bind substrate. The residue at position 163 (Ser163) is a Phosphoserine. Asp183 is a binding site for substrate. At Ser217 the chain carries Phosphoserine. 2 residues coordinate Mn(2+): Asp232 and Asp234. Substrate contacts are provided by Thr246 and Glu277.

The protein belongs to the arginase family. Homotrimer. Interacts with CMTM6. The cofactor is Mn(2+).

It is found in the cytoplasm. The catalysed reaction is L-arginine + H2O = urea + L-ornithine. It functions in the pathway nitrogen metabolism; urea cycle; L-ornithine and urea from L-arginine: step 1/1. The chain is Arginase-1 (ARG1) from Sus scrofa (Pig).